The primary structure comprises 808 residues: Protein SQS1 (808 aa).

Composition is skewed to basic residues over residues 1 to 20 and 28 to 37; these read MAKR…KRGG and RGSKRGRGGR. Disordered regions lie at residues 1 to 67, 151 to 180, and 485 to 529; these read MAKR…GDLS, RSKN…DMEI, and ETPP…EELG. 2 stretches are compositionally biased toward basic and acidic residues: residues 39 to 48 and 153 to 179; these read RGFEETERSA and KNQE…KDME. The R3H domain maps to 621–683; sequence GFHVQNIRDE…HTHIMVEKVK (63 aa). The region spanning 748-795 is the G-patch domain; the sequence is QDNIGRRMLEKLGWSSGEGLGAHGNKGISIPVMARVKKSKSGLRHSKE. A disordered region spans residues 764–808; it reads GEGLGAHGNKGISIPVMARVKKSKSGLRHSKEDEDTGRSSSFRKK. Basic residues predominate over residues 782–791; sequence RVKKSKSGLR.

Belongs to the SQS1 family.

It localises to the cytoplasm. The protein resides in the nucleus. Its function is as follows. May be involved in splicing. This Candida glabrata (strain ATCC 2001 / BCRC 20586 / JCM 3761 / NBRC 0622 / NRRL Y-65 / CBS 138) (Yeast) protein is Protein SQS1 (SQS1).